Consider the following 225-residue polypeptide: Ribosomal RNA small subunit methyltransferase G (225 aa).

S-adenosyl-L-methionine-binding positions include G71, L76, 121-122 (AE), and R139. Positions 204–225 (VVEARRATPSNGRGRPGRSSRR) are disordered.

This sequence belongs to the methyltransferase superfamily. RNA methyltransferase RsmG family.

It localises to the cytoplasm. Its function is as follows. Specifically methylates the N7 position of guanine in position 518 of 16S rRNA. The chain is Ribosomal RNA small subunit methyltransferase G from Mycobacterium sp. (strain JLS).